The chain runs to 1013 residues: Tolloid-like protein 1 (1013 aa).

The first 30 residues, 1 to 30, serve as a signal peptide directing secretion; the sequence is MGLGTLSPRMLVWLVASGIVFYGELWVCAG. The propeptide occupies 31 to 147; sequence LDYDYTFDGN…GQNEKNRVPR (117 aa). The region spanning 148–347 is the Peptidase M12A domain; the sequence is AATSRTERIW…AQARKLYRCP (200 aa). N169 carries N-linked (GlcNAc...) asparagine glycosylation. 4 cysteine pairs are disulfide-bonded: C190–C346, C210–C232, C212–C213, and C349–C375. H240 contacts Zn(2+). The active site involves E241. Residues H244 and H250 each contribute to the Zn(2+) site. 2 CUB domains span residues 349-461 and 462-574; these read CGET…YEAI and CGGE…FFKE. N-linked (GlcNAc...) asparagine glycosylation is found at N359 and N390. Disulfide bonds link C402–C424, C462–C488, C515–C537, C578–C590, C586–C599, C601–C614, C618–C644, C671–C693, C734–C745, C741–C754, C756–C769, C774–C800, C827–C849, C887–C917, and C944–C966. One can recognise an EGF-like 1; calcium-binding domain in the interval 574–615; sequence EEDECAKPDRGGCEQRCLNTLGSYQCACEPGYELGPDRRSCE. Residues 618 to 730 enclose the CUB 3 domain; it reads CGGLLTKLNG…KGFKAHFFSD (113 aa). An N-linked (GlcNAc...) asparagine glycan is attached at N626. Residues 730–770 form the EGF-like 2; calcium-binding domain; it reads DKDECSKDNGGCQHECVNTMGSYMCQCRNGFVLHDNKHDCK. CUB domains are found at residues 774–886 and 887–1003; these read CEQK…HSTE and CGGR…YKSI.

It depends on Zn(2+) as a cofactor.

Its subcellular location is the secreted. In terms of biological role, protease which processes procollagen C-propeptides, such as chordin, pro-biglycan and pro-lysyl oxidase. Required for the embryonic development. Predominant protease, which in the development, influences dorsal-ventral patterning and skeletogenesis. The protein is Tolloid-like protein 1 (TLL1) of Homo sapiens (Human).